The following is a 103-amino-acid chain: uncharacterized protein (103 aa).

The protein localises to the plastid. It localises to the chloroplast. This is an uncharacterized protein from Auxenochlorella pyrenoidosa (Freshwater green alga).